The following is a 162-amino-acid chain: Ribosomal RNA large subunit methyltransferase H (162 aa).

Position 108 (glycine 108) interacts with S-adenosyl-L-methionine.

It belongs to the RNA methyltransferase RlmH family. As to quaternary structure, homodimer.

It localises to the cytoplasm. It catalyses the reaction pseudouridine(1915) in 23S rRNA + S-adenosyl-L-methionine = N(3)-methylpseudouridine(1915) in 23S rRNA + S-adenosyl-L-homocysteine + H(+). In terms of biological role, specifically methylates the pseudouridine at position 1915 (m3Psi1915) in 23S rRNA. The chain is Ribosomal RNA large subunit methyltransferase H from Methylobacterium sp. (strain 4-46).